The primary structure comprises 500 residues: Zinc finger protein 689 (500 aa).

A disordered region spans residues 1–24 (MAPPSAPLLEQAPGEVGPTRRRGR). Residues 29-100 (LKFADVAVYF…AALDPQEYRR (72 aa)) form the KRAB domain. Residues 110–144 (TRQKNEEKEVFPPKDVPRKGKRGRKPSKPRLIARQ) form a disordered region. Residues 112–127 (QKNEEKEVFPPKDVPR) show a composition bias toward basic and acidic residues. A compositionally biased stretch (basic residues) spans 128–137 (KGKRGRKPSK). The segment at 149-171 (PICPDCGCTFPDLPALESHKCAQ) adopts a C2H2-type 1; degenerate zinc-finger fold. 10 consecutive C2H2-type zinc fingers follow at residues 177-199 (YPCP…RRAH), 205-227 (YVCD…QVIH), 233-255 (YHCP…RTTH), 261-283 (HQCP…QRTH), 289-311 (YTCL…QRIH), 317-339 (YPCP…RRVH), 345-367 (YACE…QLLH), 373-395 (YPCP…RSTH), 401-423 (HACD…RRVH), and 429-451 (YACD…QLLH). Lys455 is covalently cross-linked (Glycyl lysine isopeptide (Lys-Gly) (interchain with G-Cter in SUMO2)). The segment at 457–482 (FPCLECGRCFRQRWSLAVHKCCPNTH) adopts a C2H2-type 12 zinc-finger fold.

It belongs to the krueppel C2H2-type zinc-finger protein family.

Its subcellular location is the nucleus. Its function is as follows. May be involved in transcriptional regulation. This is Zinc finger protein 689 (Znf689) from Rattus norvegicus (Rat).